Consider the following 853-residue polypeptide: Bromodomain-containing protein bet-1 (853 aa).

Over residues 1–19 (MSEGSGDQSQQRPWASPRQ) the composition is skewed to polar residues. Disordered regions lie at residues 1 to 22 (MSEGSGDQSQQRPWASPRQQPI) and 141 to 245 (SLEQ…LRAK). The region spanning 39 to 145 (RHTNKLDYIM…EVIKKSLEQA (107 aa)) is the Bromo 1 domain. The segment covering 141-153 (SLEQAPREEHDMD) has biased composition (basic and acidic residues). Low complexity-rich tracts occupy residues 166–175 (SDGGSKSSSS) and 192–215 (SEVSSVTTASAAAPTVSESASVAA). A Glycyl lysine isopeptide (Lys-Gly) (interchain with G-Cter in SUMO) cross-link involves residue K252. Residues 257-366 (QPLLPSMKPC…EVFDRRWAEL (110 aa)) enclose the Bromo 2 domain. Positions 369-381 (SSSRASSVAPQSA) are enriched in low complexity. The segment at 369-418 (SSSRASSVAPQSAPIAPTPKVAKSSAPKEPKESRKEHKKETTFEASGAKS) is disordered. A compositionally biased stretch (basic and acidic residues) spans 394–410 (APKEPKESRKEHKKETT). A coiled-coil region spans residues 419–458 (EDLMQINNALSMIREREEKLKAELAAAQAIKDKLTSVKNR). The NET domain maps to 516 to 601 (DSDDEDNKMA…TIPTLNGNGD (86 aa)). Disordered regions lie at residues 594–814 (PTLN…DEQT) and 819–838 (MRMEAKRARQKEDEGSVSLS). Residues 612-624 (TSSGATGSKGSSS) are compositionally biased toward low complexity. Over residues 684 to 696 (QPPSTSREWNQSS) the composition is skewed to polar residues. Over residues 708–736 (QPPMSRVPASSSTSVSAIGKNNAAASSNS) the composition is skewed to low complexity. Residues 786–807 (QFFQSQPTTSATIRSPTESQPG) are compositionally biased toward polar residues. Over residues 819–832 (MRMEAKRARQKEDE) the composition is skewed to basic and acidic residues.

This sequence belongs to the BET family. Interacts with acetylated histone H4. Interacts (via BROMO domain 2) with smo-1 and ubc-9. Expressed in T-cells, Q-cells, V5-cells and their descendants such as somatic gonad and syncytium.

Its subcellular location is the nucleus. It is found in the chromosome. Its function is as follows. Required for the establishment and maintenance of stable cell fate in several lineages including V5.pa, T, Z1/Z4 and QR lineages probably by repressing the expression of cell fate determinants. Required to maintain non-distal tip cell (DTC) fate of somatic gonadal cells through the htz-1-mediated repression of transcription factor ceh-22. Regulates the subnuclear localization of histone variant htz-1 in somatic gonadal cells. Plays a role in the attenuation of the let-60/ras pathway, probably by preventing expression of activators of the pathway. Involved in adult locomotion. Acts together with the sumoylation pathway to prevent muscle myosin depletion in aging adults probably by preventing myoblast growth factor receptor egl-15 overexpression. May play a role in vulva development. The sequence is that of Bromodomain-containing protein bet-1 from Caenorhabditis elegans.